The primary structure comprises 100 residues: Aspartyl/glutamyl-tRNA(Asn/Gln) amidotransferase subunit C (100 aa).

The protein belongs to the GatC family. Heterotrimer of A, B and C subunits.

The enzyme catalyses L-glutamyl-tRNA(Gln) + L-glutamine + ATP + H2O = L-glutaminyl-tRNA(Gln) + L-glutamate + ADP + phosphate + H(+). The catalysed reaction is L-aspartyl-tRNA(Asn) + L-glutamine + ATP + H2O = L-asparaginyl-tRNA(Asn) + L-glutamate + ADP + phosphate + 2 H(+). Allows the formation of correctly charged Asn-tRNA(Asn) or Gln-tRNA(Gln) through the transamidation of misacylated Asp-tRNA(Asn) or Glu-tRNA(Gln) in organisms which lack either or both of asparaginyl-tRNA or glutaminyl-tRNA synthetases. The reaction takes place in the presence of glutamine and ATP through an activated phospho-Asp-tRNA(Asn) or phospho-Glu-tRNA(Gln). The chain is Aspartyl/glutamyl-tRNA(Asn/Gln) amidotransferase subunit C from Rickettsia africae (strain ESF-5).